We begin with the raw amino-acid sequence, 401 residues long: Chalcone synthase 4 (401 aa).

The active site involves Cys168.

Belongs to the thiolase-like superfamily. Chalcone/stilbene synthases family.

The catalysed reaction is (E)-4-coumaroyl-CoA + 3 malonyl-CoA + 3 H(+) = 2',4,4',6'-tetrahydroxychalcone + 3 CO2 + 4 CoA. Its pathway is secondary metabolite biosynthesis; flavonoid biosynthesis. In terms of biological role, the primary product of this enzyme is 4,2',4',6'-tetrahydroxychalcone (also termed naringenin-chalcone or chalcone) which can under specific conditions spontaneously isomerize into naringenin. This Sorghum bicolor (Sorghum) protein is Chalcone synthase 4 (CHS4).